The sequence spans 81 residues: Putative defensin-like protein 25 (81 aa).

The first 23 residues, 1–23 (MASLKVFSFALILVLTFSVDVEG), serve as a signal peptide directing secretion. Intrachain disulfides connect cysteine 33–cysteine 81, cysteine 43–cysteine 68, cysteine 52–cysteine 77, and cysteine 56–cysteine 79.

Belongs to the DEFL family.

The protein resides in the secreted. The polypeptide is Putative defensin-like protein 25 (Arabidopsis thaliana (Mouse-ear cress)).